The primary structure comprises 175 residues: MRSIFLAVLGLMATSSLAAPRVAAQEGISAFDAMAKLKSVPLGYVHIADDGVARAYDENESVIDYVPLTNDQLKHLLQNLPEAWKKEEDHLHAVFDAVDGREVTDEKQLLEPPAELRNPMNHQAPQSKREANPLQQADYYCVGQPCTSGDACRFLGCRGCAQIDAALPGGGGVCF.

Positions 1–18 (MRSIFLAVLGLMATSSLA) are cleaved as a signal peptide. Asparagine 59 carries N-linked (GlcNAc...) asparagine glycosylation.

This is Lactobacillus up-regulated protein (lbuA) from Emericella nidulans (strain FGSC A4 / ATCC 38163 / CBS 112.46 / NRRL 194 / M139) (Aspergillus nidulans).